The chain runs to 322 residues: MNEKTIILANPRGFCAGVDRAISIVERALEEFGAPIYVRHEVVHNKFVVDNLREKGAVFIEDLAEVPPGATLVYSAHGVSKAVRQEAAERGFRVFDATCPLVTKVHKEVARLDAQDCEIIMIGHKGHVEVEGTMGQLAPGKMLLVETVGDVAKLEVRNPDKLAYVSQTTLSVDETKDIIAALNARFPNIRNPHKEDICYATTNRQTAVKELAEQCDIVIVVGSPNSSNSNRLREVAASRGIDAYMVDNAGYLQRAWFEGKNKVGVTAGASAPEVLVREVLATIRGWGHETVREGEGAEESIVFVLPKELRREGETKPDLCKR.

Cys15 is a binding site for [4Fe-4S] cluster. (2E)-4-hydroxy-3-methylbut-2-enyl diphosphate-binding residues include His44 and His77. Dimethylallyl diphosphate is bound by residues His44 and His77. Residues His44 and His77 each coordinate isopentenyl diphosphate. Cys99 is a binding site for [4Fe-4S] cluster. Residue His127 coordinates (2E)-4-hydroxy-3-methylbut-2-enyl diphosphate. Residue His127 participates in dimethylallyl diphosphate binding. Residue His127 coordinates isopentenyl diphosphate. Residue Glu129 is the Proton donor of the active site. Thr168 provides a ligand contact to (2E)-4-hydroxy-3-methylbut-2-enyl diphosphate. Cys198 provides a ligand contact to [4Fe-4S] cluster. Ser226, Ser227, Asn228, and Ser270 together coordinate (2E)-4-hydroxy-3-methylbut-2-enyl diphosphate. Dimethylallyl diphosphate contacts are provided by Ser226, Ser227, Asn228, and Ser270. Isopentenyl diphosphate-binding residues include Ser226, Ser227, Asn228, and Ser270.

Belongs to the IspH family. Requires [4Fe-4S] cluster as cofactor.

The catalysed reaction is isopentenyl diphosphate + 2 oxidized [2Fe-2S]-[ferredoxin] + H2O = (2E)-4-hydroxy-3-methylbut-2-enyl diphosphate + 2 reduced [2Fe-2S]-[ferredoxin] + 2 H(+). It catalyses the reaction dimethylallyl diphosphate + 2 oxidized [2Fe-2S]-[ferredoxin] + H2O = (2E)-4-hydroxy-3-methylbut-2-enyl diphosphate + 2 reduced [2Fe-2S]-[ferredoxin] + 2 H(+). The protein operates within isoprenoid biosynthesis; dimethylallyl diphosphate biosynthesis; dimethylallyl diphosphate from (2E)-4-hydroxy-3-methylbutenyl diphosphate: step 1/1. It functions in the pathway isoprenoid biosynthesis; isopentenyl diphosphate biosynthesis via DXP pathway; isopentenyl diphosphate from 1-deoxy-D-xylulose 5-phosphate: step 6/6. In terms of biological role, catalyzes the conversion of 1-hydroxy-2-methyl-2-(E)-butenyl 4-diphosphate (HMBPP) into a mixture of isopentenyl diphosphate (IPP) and dimethylallyl diphosphate (DMAPP). Acts in the terminal step of the DOXP/MEP pathway for isoprenoid precursor biosynthesis. The protein is 4-hydroxy-3-methylbut-2-enyl diphosphate reductase of Neisseria meningitidis serogroup A / serotype 4A (strain DSM 15465 / Z2491).